Consider the following 748-residue polypeptide: MGLRTAKKRGLGGGGKWKREEGGGTRGRREVRPACFLQSGGRGDPGDVGGPAGNPGCSPHPRAATRPPPLPAHTPAHTPEWCGAASAEAAEPRRAGPHLCIPAPGLTKTPILEKVPRKMAAKTPSSEESGLPKLPVPPLQQTLATYLQCMRHLVSEEQFRKSQAIVQQFGAPGGLGETLQQKLLERQEKTANWVSEYWLNDMYLNNRLALPVNSSPAVIFARQHFPGTDDQLRFAASLISGVLSYKALLDSHSIPTDCAKGQLSGQPLCMKQYYGLFSSYRLPGHTQDTLVAQNSSIMPEPEHVIVACCNQFFVLDVVINFRRLSEGDLFTQLRKIVKMASNEDERLPPIGLLTSDGRSEWAEARTVLVKDSTNRDSLDMIERCICLVCLDAPGGVELSDTHRALQLLHGGGYSKNGANRWYDKSLQFVVGRDGTCGVVCEHSPFDGIVLVQCTEHLLKHVTQSSRKLIRADSVSELPAPRRLRWKCSPEIQGHLASSAEKLQRIVKNLDFIVYKFDNYGKTFIKKQKCSPDAFIQVALQLAFYRLHRRLVPTYESASIRRFQEGRVDNIRSATPEALAFVRAVTDHKAAVPASEKLLLLKDAIRAQTAYTVMAITGMAIDNHLLALRELARAMCKELPEMFMDETYLMSNRFVLSTSQVPTTTEMFCCYGPVVPNGYGACYNPQPETILFCISSFHSCKETSSSKFAKAVEESLIDMRDLCSLLPPTESKPLATKEKATRPSQGHQP.

A compositionally biased stretch (basic residues) spans 1 to 10 (MGLRTAKKRG). The interval 1-89 (MGLRTAKKRG…EWCGAASAEA (89 aa)) is disordered. Residues 17-32 (WKREEGGGTRGRREVR) are compositionally biased toward basic and acidic residues. Residues 40–53 (GGRGDPGDVGGPAG) show a composition bias toward gly residues. Low complexity-rich tracts occupy residues 54–65 (NPGCSPHPRAAT) and 73–89 (HTPA…SAEA). Residue Ser-125 is modified to Phosphoserine. His-442 (proton acceptor) is an active-site residue. At Ser-473 the chain carries Phosphoserine. CoA contacts are provided by residues 520–532 (GKTF…CSPD), Ser-558, and Gln-659. The tract at residues 727 to 748 (PTESKPLATKEKATRPSQGHQP) is disordered.

It belongs to the carnitine/choline acetyltransferase family.

The enzyme catalyses choline + acetyl-CoA = acetylcholine + CoA. Catalyzes the reversible synthesis of acetylcholine (ACh) from acetyl CoA and choline at cholinergic synapses. This is Choline O-acetyltransferase (CHAT) from Homo sapiens (Human).